Consider the following 367-residue polypeptide: Ribosomal lysine N-methyltransferase 5 (367 aa).

The segment at glutamate 55–glutamate 74 is disordered. Over residues arginine 58 to lysine 68 the composition is skewed to basic residues. S-adenosyl-L-methionine-binding positions include tryptophan 110, glycine 170 to glycine 172, aspartate 192, tryptophan 256, and methionine 288.

Belongs to the class I-like SAM-binding methyltransferase superfamily. RKM5 family.

In terms of biological role, S-adenosyl-L-methionine-dependent protein-lysine N-methyltransferase that monomethylates 60S ribosomal protein L1 (RPL1A and RPL1B) at 'Lys-46'. This chain is Ribosomal lysine N-methyltransferase 5 (RKM5), found in Saccharomyces cerevisiae (strain RM11-1a) (Baker's yeast).